Reading from the N-terminus, the 197-residue chain is FMN-dependent NADH:quinone oxidoreductase (197 aa).

Residues Ser-10, Ser-16–Ser-18, Met-93–Phe-96, and Thr-137–Gly-140 contribute to the FMN site.

It belongs to the azoreductase type 1 family. As to quaternary structure, homodimer. The cofactor is FMN.

It carries out the reaction 2 a quinone + NADH + H(+) = 2 a 1,4-benzosemiquinone + NAD(+). The catalysed reaction is N,N-dimethyl-1,4-phenylenediamine + anthranilate + 2 NAD(+) = 2-(4-dimethylaminophenyl)diazenylbenzoate + 2 NADH + 2 H(+). Its function is as follows. Quinone reductase that provides resistance to thiol-specific stress caused by electrophilic quinones. In terms of biological role, also exhibits azoreductase activity. Catalyzes the reductive cleavage of the azo bond in aromatic azo compounds to the corresponding amines. This Shewanella denitrificans (strain OS217 / ATCC BAA-1090 / DSM 15013) protein is FMN-dependent NADH:quinone oxidoreductase.